The chain runs to 102 residues: Small ribosomal subunit protein uS10 (102 aa).

It belongs to the universal ribosomal protein uS10 family. In terms of assembly, part of the 30S ribosomal subunit.

In terms of biological role, involved in the binding of tRNA to the ribosomes. This is Small ribosomal subunit protein uS10 from Pyrococcus abyssi (strain GE5 / Orsay).